The sequence spans 680 residues: DNA-directed RNA polymerase subunit beta' (680 aa).

Zn(2+)-binding residues include Cys-69, Cys-71, Cys-87, and Cys-90. Residues Asp-489, Asp-491, and Asp-493 each contribute to the Mg(2+) site.

Belongs to the RNA polymerase beta' chain family. RpoC1 subfamily. In plastids the minimal PEP RNA polymerase catalytic core is composed of four subunits: alpha, beta, beta', and beta''. When a (nuclear-encoded) sigma factor is associated with the core the holoenzyme is formed, which can initiate transcription. It depends on Mg(2+) as a cofactor. Zn(2+) is required as a cofactor.

It localises to the plastid. The protein resides in the chloroplast. It carries out the reaction RNA(n) + a ribonucleoside 5'-triphosphate = RNA(n+1) + diphosphate. Functionally, DNA-dependent RNA polymerase catalyzes the transcription of DNA into RNA using the four ribonucleoside triphosphates as substrates. In Amborella trichopoda, this protein is DNA-directed RNA polymerase subunit beta'.